A 479-amino-acid chain; its full sequence is Probable glycine dehydrogenase (decarboxylating) subunit 2 (479 aa).

An N6-(pyridoxal phosphate)lysine modification is found at K265.

It belongs to the GcvP family. C-terminal subunit subfamily. The glycine cleavage system is composed of four proteins: P, T, L and H. In this organism, the P 'protein' is a heterodimer of two subunits. Pyridoxal 5'-phosphate is required as a cofactor.

It catalyses the reaction N(6)-[(R)-lipoyl]-L-lysyl-[glycine-cleavage complex H protein] + glycine + H(+) = N(6)-[(R)-S(8)-aminomethyldihydrolipoyl]-L-lysyl-[glycine-cleavage complex H protein] + CO2. The glycine cleavage system catalyzes the degradation of glycine. The P protein binds the alpha-amino group of glycine through its pyridoxal phosphate cofactor; CO(2) is released and the remaining methylamine moiety is then transferred to the lipoamide cofactor of the H protein. In Pseudothermotoga lettingae (strain ATCC BAA-301 / DSM 14385 / NBRC 107922 / TMO) (Thermotoga lettingae), this protein is Probable glycine dehydrogenase (decarboxylating) subunit 2.